The following is a 375-amino-acid chain: uncharacterized protein (375 aa).

A compositionally biased stretch (basic residues) spans 1-12 (MAGNKKQVKKNT). 2 disordered regions span residues 1–76 (MAGN…EKKS) and 119–274 (KNKN…KEIK). Over residues 26 to 39 (DTSNLDTAVQTSAS) the composition is skewed to polar residues. Residues 129–141 (TATDGTTTTTNIP) are compositionally biased toward low complexity. A compositionally biased stretch (basic and acidic residues) spans 175–185 (DETHSHKEEPK). Low complexity-rich tracts occupy residues 198 to 212 (SKQQ…SSSS) and 225 to 241 (PTPT…KSTP). The segment covering 256–274 (EQPKEKSSPAPVKKEKEIK) has biased composition (basic and acidic residues). 2 helical membrane passes run 299–319 (VVYK…LVPL) and 327–347 (IYSY…TLFI). The disordered stretch occupies residues 355–375 (ASKEQKSKSGNKKSTTRKVKA). The span at 363–375 (SGNKKSTTRKVKA) shows a compositional bias: basic residues.

Its subcellular location is the membrane. This is an uncharacterized protein from Dictyostelium discoideum (Social amoeba).